Reading from the N-terminus, the 113-residue chain is Hydrogenase maturation factor HypA (113 aa).

His2 contacts Ni(2+). Cys73, Cys76, Cys89, and Cys92 together coordinate Zn(2+).

The protein belongs to the HypA/HybF family.

Functionally, involved in the maturation of [NiFe] hydrogenases. Required for nickel insertion into the metal center of the hydrogenase. The protein is Hydrogenase maturation factor HypA of Picosynechococcus sp. (strain ATCC 27264 / PCC 7002 / PR-6) (Agmenellum quadruplicatum).